A 382-amino-acid chain; its full sequence is Anhydro-N-acetylmuramic acid kinase (382 aa).

18–25 is a binding site for ATP; sequence GTSLDGVD.

The protein belongs to the anhydro-N-acetylmuramic acid kinase family.

The catalysed reaction is 1,6-anhydro-N-acetyl-beta-muramate + ATP + H2O = N-acetyl-D-muramate 6-phosphate + ADP + H(+). The protein operates within amino-sugar metabolism; 1,6-anhydro-N-acetylmuramate degradation. Its pathway is cell wall biogenesis; peptidoglycan recycling. Functionally, catalyzes the specific phosphorylation of 1,6-anhydro-N-acetylmuramic acid (anhMurNAc) with the simultaneous cleavage of the 1,6-anhydro ring, generating MurNAc-6-P. Is required for the utilization of anhMurNAc either imported from the medium or derived from its own cell wall murein, and thus plays a role in cell wall recycling. This Ralstonia nicotianae (strain ATCC BAA-1114 / GMI1000) (Ralstonia solanacearum) protein is Anhydro-N-acetylmuramic acid kinase.